The following is a 122-amino-acid chain: Large ribosomal subunit protein uL14 (122 aa).

The protein belongs to the universal ribosomal protein uL14 family. Part of the 50S ribosomal subunit. Forms a cluster with proteins L3 and L19. In the 70S ribosome, L14 and L19 interact and together make contacts with the 16S rRNA in bridges B5 and B8.

Binds to 23S rRNA. Forms part of two intersubunit bridges in the 70S ribosome. The polypeptide is Large ribosomal subunit protein uL14 (Staphylococcus haemolyticus (strain JCSC1435)).